The sequence spans 237 residues: uncharacterized protein (237 aa).

The Response regulatory domain occupies 3–116 (RILLVEDDER…VVMAKIKSVL (114 aa)). D52 is subject to 4-aspartylphosphate. Residues 131 to 229 (SRIVELGGLT…IRGQGYQFQV (99 aa)) constitute a DNA-binding region (ompR/PhoB-type).

Phosphorylated by YvcQ.

The protein resides in the cytoplasm. Functionally, member of the two-component regulatory system YvcQ/YvcP. This is an uncharacterized protein from Bacillus subtilis (strain 168).